The sequence spans 67 residues: MSVALKKFFSKRGQLSLEFSVLVLAVITAAILLGYHLIVSSKAVQESNIDTINNTHNTAIDALSEVS.

Positions 1–13 (MSVALKKFFSKRG) are excised as a propeptide. Residues 14–22 (QLSLEFSVL) carry the QXSXEXXXL motif.

Post-translationally, the N-terminus is cleaved by the prepilin peptidase EppA, which recognizes the class III signal sequence. In terms of processing, N-glycosylated. Glycosylation is AglB-dependent. The N-glycosylation does not occur unless the signal peptide has been cleaved first.

The protein resides in the secreted. It localises to the cell surface. It is found in the fimbrium. Minor component of the type IV-like pili. Essential for pili formation. The protein is Minor structural pilin EpdD of Methanococcus maripaludis (strain DSM 14266 / JCM 13030 / NBRC 101832 / S2 / LL).